A 172-amino-acid chain; its full sequence is Adenine phosphoribosyltransferase (172 aa).

Belongs to the purine/pyrimidine phosphoribosyltransferase family. As to quaternary structure, homodimer.

It localises to the cytoplasm. It catalyses the reaction AMP + diphosphate = 5-phospho-alpha-D-ribose 1-diphosphate + adenine. Its pathway is purine metabolism; AMP biosynthesis via salvage pathway; AMP from adenine: step 1/1. Catalyzes a salvage reaction resulting in the formation of AMP, that is energically less costly than de novo synthesis. In Polynucleobacter necessarius subsp. necessarius (strain STIR1), this protein is Adenine phosphoribosyltransferase.